A 446-amino-acid chain; its full sequence is N-succinylarginine dihydrolase (446 aa).

Residues 19 to 28 (AGLSFGNVAS), Asn-110, and 137 to 138 (HR) each bind substrate. Glu-174 is a catalytic residue. Arg-213 lines the substrate pocket. His-249 is a catalytic residue. Residues Asp-251 and Asn-364 each contribute to the substrate site. Residue Cys-370 is the Nucleophile of the active site.

Belongs to the succinylarginine dihydrolase family. As to quaternary structure, homodimer.

It catalyses the reaction N(2)-succinyl-L-arginine + 2 H2O + 2 H(+) = N(2)-succinyl-L-ornithine + 2 NH4(+) + CO2. It functions in the pathway amino-acid degradation; L-arginine degradation via AST pathway; L-glutamate and succinate from L-arginine: step 2/5. Catalyzes the hydrolysis of N(2)-succinylarginine into N(2)-succinylornithine, ammonia and CO(2). The sequence is that of N-succinylarginine dihydrolase from Burkholderia cenocepacia (strain ATCC BAA-245 / DSM 16553 / LMG 16656 / NCTC 13227 / J2315 / CF5610) (Burkholderia cepacia (strain J2315)).